The following is an 89-amino-acid chain: Large ribosomal subunit protein bL27 (89 aa).

The disordered stretch occupies residues 1 to 24 (MAHKKAGGSSRNGRDSDGRRLGVK).

This sequence belongs to the bacterial ribosomal protein bL27 family.

This is Large ribosomal subunit protein bL27 from Azorhizobium caulinodans (strain ATCC 43989 / DSM 5975 / JCM 20966 / LMG 6465 / NBRC 14845 / NCIMB 13405 / ORS 571).